The sequence spans 62 residues: MAKGESERIVLEVEPELKKALYSVLAMEQKTLKDWFVDKAQEHICEKKSELIERFSKVDNEI.

This is an uncharacterized protein from Escherichia coli.